The primary structure comprises 363 residues: MSIESFANQHVLELVAYQPGKPIEETARELGLNPHDIVKLASNENPLGPSPKAVEAIARAAAGVNIYPDGAAFRLRSAIAEFCGVEFGQTVVGTGSSEVIELICHALLNPRAEVVAAKHAFSMYPIMSKLFGAAYVEVPNKEDWTHDLDGFLAAITENTRVVFITNPTNPVGTVVGQQEIDDFMAKVPEHVLVVFDEAYREFSDNPPDTLKFVREGRNVVVLRTFSKAYGLAGLRVGYGIAPEPVCSMLHKARAPFNLHVLAQEAALAALEDREHVRRTVENNKEGMRFYEQAFREMGLEWIPSQGNFILVKVGRGKQVFQDMLARGVIVRAQDGYGLPEWIRISIGTPAENARCIEVLKEVL.

Residue Lys-227 is modified to N6-(pyridoxal phosphate)lysine.

This sequence belongs to the class-II pyridoxal-phosphate-dependent aminotransferase family. Histidinol-phosphate aminotransferase subfamily. In terms of assembly, homodimer. Requires pyridoxal 5'-phosphate as cofactor.

The enzyme catalyses L-histidinol phosphate + 2-oxoglutarate = 3-(imidazol-4-yl)-2-oxopropyl phosphate + L-glutamate. It participates in amino-acid biosynthesis; L-histidine biosynthesis; L-histidine from 5-phospho-alpha-D-ribose 1-diphosphate: step 7/9. This is Histidinol-phosphate aminotransferase from Akkermansia muciniphila (strain ATCC BAA-835 / DSM 22959 / JCM 33894 / BCRC 81048 / CCUG 64013 / CIP 107961 / Muc).